Consider the following 439-residue polypeptide: Glutamine synthetase (439 aa).

The 86-residue stretch at 13–98 (ENVRFIRLQF…VICDVYTPDG (86 aa)) folds into the GS beta-grasp domain. Residues 105–439 (PRYRLRRMME…NWELQRYLYL (335 aa)) enclose the GS catalytic domain. The Mg(2+) site is built by Glu-128 and Glu-130. Glu-180 contributes to the ATP binding site. 2 residues coordinate Mg(2+): Glu-185 and Glu-192. L-glutamate-binding positions include 236–237 (NG) and Gly-237. His-241 is a binding site for Mg(2+). Residues 243 to 245 (HMS) and Ser-245 contribute to the ATP site. Residues Arg-294, Glu-300, and Arg-312 each contribute to the L-glutamate site. 3 residues coordinate ATP: Arg-312, Arg-317, and Lys-324. Glu-329 is a binding site for Mg(2+). Arg-331 contacts L-glutamate.

The protein belongs to the glutamine synthetase family. In terms of assembly, oligomer of 12 subunits arranged in the form of two hexagons. In its feedback-inhibited form, interacts with TnrA in order to block its DNA-binding activity. It depends on Mg(2+) as a cofactor.

The protein localises to the cytoplasm. It carries out the reaction L-glutamate + NH4(+) + ATP = L-glutamine + ADP + phosphate + H(+). With respect to regulation, inhibited by glutamine. Functionally, glutamine synthetase (GS) is an unusual multitasking protein that functions as an enzyme, a transcription coregulator, and a chaperone in ammonium assimilation and in the regulation of genes involved in nitrogen metabolism. It catalyzes the ATP-dependent biosynthesis of glutamine from glutamate and ammonia. Feedback-inhibited GlnA also interacts with and regulates the activity of the transcriptional regulator TnrA. During nitrogen limitation, TnrA is in its DNA-binding active state and turns on the transcription of genes required for nitrogen assimilation. Under conditions of nitrogen excess, feedback-inhibited GlnA forms a stable complex with TnrA, which inhibits its DNA-binding activity. In contrast, feedback-inhibited GlnA acts as a chaperone to stabilize the DNA-binding activity of GlnR, which represses the transcription of nitrogen assimilation genes. This is Glutamine synthetase from Thermotoga maritima (strain ATCC 43589 / DSM 3109 / JCM 10099 / NBRC 100826 / MSB8).